A 71-amino-acid polypeptide reads, in one-letter code: Translation initiation factor IF-1 (71 aa).

The S1-like domain maps to 1–71 (MAKDAIKLRA…TKGRITYRHK (71 aa)).

Belongs to the IF-1 family. As to quaternary structure, component of the 30S ribosomal translation pre-initiation complex which assembles on the 30S ribosome in the order IF-2 and IF-3, IF-1 and N-formylmethionyl-tRNA(fMet); mRNA recruitment can occur at any time during PIC assembly.

It localises to the cytoplasm. Its function is as follows. One of the essential components for the initiation of protein synthesis. Stabilizes the binding of IF-2 and IF-3 on the 30S subunit to which N-formylmethionyl-tRNA(fMet) subsequently binds. Helps modulate mRNA selection, yielding the 30S pre-initiation complex (PIC). Upon addition of the 50S ribosomal subunit IF-1, IF-2 and IF-3 are released leaving the mature 70S translation initiation complex. In Mycoplasmopsis synoviae (strain 53) (Mycoplasma synoviae), this protein is Translation initiation factor IF-1.